Here is a 74-residue protein sequence, read N- to C-terminus: Protein SspS (74 aa).

Belongs to the alpha/beta-type SASP family.

This is Protein SspS (sspS) from Streptococcus pyogenes.